Consider the following 955-residue polypeptide: MGIKQHNGNTKADRLAELKIRSPSIQLIKFGAIGLNAIIFSPLLIAADTGSQYGTNITINDGDRITGDTADPSGNLYGVMTPAGNTPGNINLGNDVTVNVNDASGYAKGIIIQGKNSSLTANRLTVDVVGQTSAIGINLIGDYTHADLGTGSTIKSNDDGIIIGHSSTLTATQFTIENSNGIGLTINDYGTSVDLGSGSKITTDGSTGVYIGGLNGNNANGAARFTATDLTIDVQGYSAMGINVQKNSVVDLGTNSTIKTNGDNAHGLWSFGQVSANALTVDVTGAAANGVEVRGGTTTIGADSHISSAQGGGLVTSGSDAIINFTGTAAQRNSIFSGGSYGASAQTATAVVNMQNTDITVDRNGSLALGLWALSGGRITGDSLAITGAAGARGIYAMTNSQIDLTSDLVIDMSTPDQMAIATQHDDGYAASRINASGRMLINGSVLSKGGLINLDMHPGSVWTGSSLSDNVNGGKLDVAMNNSVWNVTSNSNLDTLALSHSTVDFASHGSTAGTFATLNVENLSGNSTFIMRADVVGEGNGVNNKGDLLNISGSSAGNHVLAIRNQGSEATTGNEVLTVVKTTDGAASFSASSQVELGGYLYDVRKNGTNWELYASGTVPEPTPNPEPTPAPAQPPIVNPDPTPEPAPTPKPTTTADAGGNYLNVGYLLNYVENRTLMQRMGDLRNQSKDGNIWLRSYGGSLDSFASGKLSGFDMGYSGIQFGGDKRLSDVMPLYVGLYIGSTHASPDYSGGDGTARSDYMGMYASYMAQNGFYSDLVIKASRQKNSFHVLDSQNNGVNANGTANGMSISLEAGQRFNLSPTGYGFYIEPQTQLTYSHQNEMTMKASNGLNIHLNHYESLLGRASMILGYDITAGNSQLNVYVKTGAIREFSGDTEYLLNNSREKYSFKGNGWNNGVGVSAQYNKQHTFYLEADYTQGNLFDQKQVNGGYRFSF.

The disordered stretch occupies residues 616 to 659; the sequence is ASGTVPEPTPNPEPTPAPAQPPIVNPDPTPEPAPTPKPTTTADA. The segment covering 622 to 652 has biased composition (pro residues); it reads EPTPNPEPTPAPAQPPIVNPDPTPEPAPTPK. Residues 687–955 enclose the Autotransporter domain; it reads NQSKDGNIWL…QVNGGYRFSF (269 aa).

Its function is as follows. Upon overexpression shows increased adherence to polyvinyl chloride (PVC) plates, increased mature biofilm formation. This Escherichia coli (strain K12) protein is Probable autotransporter YcgV (ycgV).